A 224-amino-acid chain; its full sequence is Phosphoribosylformylglycinamidine synthase subunit PurQ (224 aa).

Residues 4 to 224 (FGIIVFPGSN…ATDGLAMFIS (221 aa)) form the Glutamine amidotransferase type-1 domain. Cys-87 functions as the Nucleophile in the catalytic mechanism. Catalysis depends on residues His-204 and Glu-206.

As to quaternary structure, part of the FGAM synthase complex composed of 1 PurL, 1 PurQ and 2 PurS subunits.

The protein localises to the cytoplasm. It carries out the reaction N(2)-formyl-N(1)-(5-phospho-beta-D-ribosyl)glycinamide + L-glutamine + ATP + H2O = 2-formamido-N(1)-(5-O-phospho-beta-D-ribosyl)acetamidine + L-glutamate + ADP + phosphate + H(+). It catalyses the reaction L-glutamine + H2O = L-glutamate + NH4(+). It participates in purine metabolism; IMP biosynthesis via de novo pathway; 5-amino-1-(5-phospho-D-ribosyl)imidazole from N(2)-formyl-N(1)-(5-phospho-D-ribosyl)glycinamide: step 1/2. Its function is as follows. Part of the phosphoribosylformylglycinamidine synthase complex involved in the purines biosynthetic pathway. Catalyzes the ATP-dependent conversion of formylglycinamide ribonucleotide (FGAR) and glutamine to yield formylglycinamidine ribonucleotide (FGAM) and glutamate. The FGAM synthase complex is composed of three subunits. PurQ produces an ammonia molecule by converting glutamine to glutamate. PurL transfers the ammonia molecule to FGAR to form FGAM in an ATP-dependent manner. PurS interacts with PurQ and PurL and is thought to assist in the transfer of the ammonia molecule from PurQ to PurL. The protein is Phosphoribosylformylglycinamidine synthase subunit PurQ of Synechocystis sp. (strain ATCC 27184 / PCC 6803 / Kazusa).